A 564-amino-acid chain; its full sequence is Proline--tRNA ligase (564 aa).

The protein belongs to the class-II aminoacyl-tRNA synthetase family. ProS type 1 subfamily. As to quaternary structure, homodimer.

It localises to the cytoplasm. It catalyses the reaction tRNA(Pro) + L-proline + ATP = L-prolyl-tRNA(Pro) + AMP + diphosphate. In terms of biological role, catalyzes the attachment of proline to tRNA(Pro) in a two-step reaction: proline is first activated by ATP to form Pro-AMP and then transferred to the acceptor end of tRNA(Pro). As ProRS can inadvertently accommodate and process non-cognate amino acids such as alanine and cysteine, to avoid such errors it has two additional distinct editing activities against alanine. One activity is designated as 'pretransfer' editing and involves the tRNA(Pro)-independent hydrolysis of activated Ala-AMP. The other activity is designated 'posttransfer' editing and involves deacylation of mischarged Ala-tRNA(Pro). The misacylated Cys-tRNA(Pro) is not edited by ProRS. The protein is Proline--tRNA ligase of Sulfurihydrogenibium sp. (strain YO3AOP1).